A 354-amino-acid polypeptide reads, in one-letter code: Inactive ADP-ribosyltransferase arh2 (354 aa).

The protein belongs to the ADP-ribosylglycohydrolase family. Expressed in heart (at protein level). A short form is detected in both heart and tadpole tail (at protein level).

It is found in the cytoplasm. It localises to the myofibril. The protein localises to the sarcomere. Its function is as follows. Required for myofibril assembly and outgrowth of the cardiac chambers in the developing heart. Appears to be catalytically inactive, showing no activity against O-acetyl-ADP-ribose. The polypeptide is Inactive ADP-ribosyltransferase arh2 (adprhl1) (Xenopus laevis (African clawed frog)).